The sequence spans 99 residues: Large ribosomal subunit protein uL23 (99 aa).

The protein belongs to the universal ribosomal protein uL23 family. As to quaternary structure, part of the 50S ribosomal subunit. Contacts protein L29, and trigger factor when it is bound to the ribosome.

In terms of biological role, one of the early assembly proteins it binds 23S rRNA. One of the proteins that surrounds the polypeptide exit tunnel on the outside of the ribosome. Forms the main docking site for trigger factor binding to the ribosome. The protein is Large ribosomal subunit protein uL23 of Rhodopseudomonas palustris (strain HaA2).